The primary structure comprises 185 residues: MLNQIKQDAQTRMTKSIDALRHSLTTVRTGRASPALLDNIKVKAYGTDTPLNQVASISVSEGRSLVISLFDKGMIKDVEKAIYASDLGLTPTVVGTVIRLNLPPLTEERRKELSKSVHGEGEDAKVAIRNIRRDANQQVKDLLKDKQVTEDEARGAEDDIQKLTDKAIKDVDEVVKGKEQELMTV.

The protein belongs to the RRF family.

The protein localises to the cytoplasm. Functionally, responsible for the release of ribosomes from messenger RNA at the termination of protein biosynthesis. May increase the efficiency of translation by recycling ribosomes from one round of translation to another. This chain is Ribosome-recycling factor, found in Xanthomonas campestris pv. campestris (strain 8004).